Consider the following 766-residue polypeptide: Ent-copalyl diphosphate synthase 3 (766 aa).

The N-terminal 30 residues, 1–30 (FRSTAAGRCLPVTCCVFPRHFRVSSSSILP), are a transit peptide targeting the chloroplast. Position 222 (lysine 222) interacts with substrate. Mg(2+) is bound by residues aspartate 354 and aspartate 356. Residues 354–357 (DVDD) carry the DXDD motif motif. Lysine 440 contacts substrate.

It belongs to the terpene synthase family. Tpsc subfamily. Mg(2+) serves as cofactor. As to expression, accumulates in leaves, and, at low levels, in germinating seeds.

It is found in the plastid. It localises to the chloroplast. The enzyme catalyses (2E,6E,10E)-geranylgeranyl diphosphate = ent-copalyl diphosphate. The protein operates within plant hormone biosynthesis; gibberellin biosynthesis. Its pathway is secondary metabolite biosynthesis; terpenoid biosynthesis. Involved in the biosynthesis of ent-kaurene diterpenoids natural products such as oridonin, miltiradiene, eriocalyxin B and nezukol, known to exhibit antitumor, anti-inflammatory and antibacterial activities, and in the production of gibberellins phytohormones. Catalyzes the conversion of (2E,6E,10E)-geranylgeranyl diphosphate (GGPP) to ent-copalyl diphosphate (ent-CPP). This chain is Ent-copalyl diphosphate synthase 3, found in Isodon eriocalyx (Plectranthus eriocalyx).